Here is a 132-residue protein sequence, read N- to C-terminus: MIIEGEVVSGLGEGRYFLSLPPYKEIFKKILGFEPYEGTLNLKLDREFDINKFKYIETEDFEFNGKRFFGVKVLPIKILIGNKKIDGAIVVPKKTYHSSEIIEIIAPMKLREQFNLKDGDVIKILIKGDKDE.

10 to 15 (GLGEGR) lines the CDP pocket. Residues Thr39 and Asn41 each coordinate Mg(2+). FMN-binding residues include Thr95, Tyr96, and Glu103. 108 to 111 (MKLR) contacts CDP.

As to quaternary structure, monomer. It depends on Mg(2+) as a cofactor.

The enzyme catalyses riboflavin + CTP = CDP + FMN + H(+). It participates in cofactor biosynthesis; FMN biosynthesis; FMN from riboflavin (CTP route): step 1/1. Functionally, catalyzes the CTP-dependent phosphorylation of riboflavin (vitamin B2) to form flavin mononucleotide (FMN). Can also utilize UTP as the phosphate donor, although less efficiently, and it is unclear if ATP and GTP can also serve as substrates or not. This chain is Riboflavin kinase (ribK), found in Methanocaldococcus jannaschii (strain ATCC 43067 / DSM 2661 / JAL-1 / JCM 10045 / NBRC 100440) (Methanococcus jannaschii).